The following is a 129-amino-acid chain: uncharacterized protein (129 aa).

Residues 84–98 (QKTVSKKYKSRKGRR) show a composition bias toward basic residues. The segment at 84-129 (QKTVSKKYKSRKGRRYTRERNISSEKNKTDKSHKVRVGKIQNINND) is disordered. Residues 99–115 (YTRERNISSEKNKTDKS) show a composition bias toward basic and acidic residues.

This is an uncharacterized protein from Acanthamoeba polyphaga mimivirus (APMV).